Here is a 313-residue protein sequence, read N- to C-terminus: MNRLAVELPGLSLKNPIMPASGCFGFGREYAQFYDLSKLGAIMIKATTKEPRFGNPTPRVAETPGGMLNAIGLQNPGLQKVLEEELPWLAQFDVPIIANVAGSTMEEYVEVAKHISKAPNVHALELNISCPNVKKGGIAFGTVPEIAAELTKLVKEVSEVPVYVKLSPNVTNIVEMAKAIEAAGADGLTMINTLLGMRIDVKTAKPILANRTGGLSGPAIKPIAIRMIYEVSQAVSIPIIGMGGIQSAEDVIEFFYAGASAVAIGTANFIDPFVCPNIIAELPVLLDELGIDHISECMGRSWKKGERSVYCGA.

FMN contacts are provided by residues serine 21 and 45-46; that span reads KA. Substrate contacts are provided by residues lysine 45 and 69–73; that span reads NAIGL. Asparagine 99 and asparagine 127 together coordinate FMN. Residue asparagine 127 participates in substrate binding. Residue cysteine 130 is the Nucleophile of the active site. FMN-binding residues include lysine 165 and isoleucine 191. 192 to 193 is a binding site for substrate; sequence NT. FMN is bound by residues glycine 217, 243–244, and 265–266; these read GG and GT.

It belongs to the dihydroorotate dehydrogenase family. Type 1 subfamily. In terms of assembly, heterotetramer of 2 PyrK and 2 PyrD type B subunits. Requires FMN as cofactor.

The protein resides in the cytoplasm. The catalysed reaction is (S)-dihydroorotate + NAD(+) = orotate + NADH + H(+). Its pathway is pyrimidine metabolism; UMP biosynthesis via de novo pathway; orotate from (S)-dihydroorotate (NAD(+) route): step 1/1. In terms of biological role, catalyzes the conversion of dihydroorotate to orotate with NAD(+) as electron acceptor. This is Dihydroorotate dehydrogenase B (NAD(+)), catalytic subunit (pyrD) from Geobacillus sp. (strain WCH70).